The sequence spans 378 residues: Succinyl-diaminopimelate desuccinylase 2 (378 aa).

Residue histidine 68 participates in Zn(2+) binding. Residue aspartate 70 is part of the active site. Aspartate 101 contacts Zn(2+). The Proton acceptor role is filled by glutamate 135. 3 residues coordinate Zn(2+): glutamate 136, glutamate 164, and histidine 350.

It belongs to the peptidase M20A family. DapE subfamily. As to quaternary structure, homodimer. Zn(2+) is required as a cofactor. It depends on Co(2+) as a cofactor.

The enzyme catalyses N-succinyl-(2S,6S)-2,6-diaminopimelate + H2O = (2S,6S)-2,6-diaminopimelate + succinate. Its pathway is amino-acid biosynthesis; L-lysine biosynthesis via DAP pathway; LL-2,6-diaminopimelate from (S)-tetrahydrodipicolinate (succinylase route): step 3/3. In terms of biological role, catalyzes the hydrolysis of N-succinyl-L,L-diaminopimelic acid (SDAP), forming succinate and LL-2,6-diaminopimelate (DAP), an intermediate involved in the bacterial biosynthesis of lysine and meso-diaminopimelic acid, an essential component of bacterial cell walls. The sequence is that of Succinyl-diaminopimelate desuccinylase 2 from Alteromonas mediterranea (strain DSM 17117 / CIP 110805 / LMG 28347 / Deep ecotype).